The chain runs to 333 residues: Biotin synthase (333 aa).

The Radical SAM core domain maps to 47 to 276 (FFKNQMEFCS…KSEIRLCGGR (230 aa)). The [4Fe-4S] cluster site is built by C65, C69, and C72. The [2Fe-2S] cluster site is built by C109, C141, C201, and R271.

It belongs to the radical SAM superfamily. Biotin synthase family. In terms of assembly, homodimer. The cofactor is [4Fe-4S] cluster. [2Fe-2S] cluster serves as cofactor.

The catalysed reaction is (4R,5S)-dethiobiotin + (sulfur carrier)-SH + 2 reduced [2Fe-2S]-[ferredoxin] + 2 S-adenosyl-L-methionine = (sulfur carrier)-H + biotin + 2 5'-deoxyadenosine + 2 L-methionine + 2 oxidized [2Fe-2S]-[ferredoxin]. Its pathway is cofactor biosynthesis; biotin biosynthesis; biotin from 7,8-diaminononanoate: step 2/2. In terms of biological role, catalyzes the conversion of dethiobiotin (DTB) to biotin by the insertion of a sulfur atom into dethiobiotin via a radical-based mechanism. The protein is Biotin synthase of Sulfurihydrogenibium sp. (strain YO3AOP1).